Here is a 754-residue protein sequence, read N- to C-terminus: 1,4-alpha-glucan branching enzyme GlgB (754 aa).

The Nucleophile role is filled by aspartate 431. Glutamate 484 functions as the Proton donor in the catalytic mechanism.

It belongs to the glycosyl hydrolase 13 family. GlgB subfamily. In terms of assembly, monomer.

It carries out the reaction Transfers a segment of a (1-&gt;4)-alpha-D-glucan chain to a primary hydroxy group in a similar glucan chain.. Its pathway is glycan biosynthesis; glycogen biosynthesis. In terms of biological role, catalyzes the formation of the alpha-1,6-glucosidic linkages in glycogen by scission of a 1,4-alpha-linked oligosaccharide from growing alpha-1,4-glucan chains and the subsequent attachment of the oligosaccharide to the alpha-1,6 position. The protein is 1,4-alpha-glucan branching enzyme GlgB of Prochlorococcus marinus (strain AS9601).